A 632-amino-acid chain; its full sequence is Putative acetyl-CoA decarbonylase/synthase complex subunit alpha-like (632 aa).

The [Ni-4Fe-4S] cluster site is built by His-200, His-226, Cys-263, Cys-379, Cys-408, and Cys-438.

Belongs to the Ni-containing carbon monoxide dehydrogenase family.

In terms of biological role, part of the ACDS complex that catalyzes the reversible cleavage of acetyl-CoA, allowing autotrophic growth from CO(2). The alpha-epsilon subcomponent functions as a carbon monoxide dehydrogenase. This is Putative acetyl-CoA decarbonylase/synthase complex subunit alpha-like (cdhA2) from Methanopyrus kandleri (strain AV19 / DSM 6324 / JCM 9639 / NBRC 100938).